We begin with the raw amino-acid sequence, 274 residues long: 3-methyl-2-oxobutanoate hydroxymethyltransferase (274 aa).

Residues aspartate 46 and aspartate 85 each coordinate Mg(2+). 3-methyl-2-oxobutanoate is bound by residues aspartate 46–serine 47, aspartate 85, and lysine 115. Glutamate 117 provides a ligand contact to Mg(2+). Glutamate 184 acts as the Proton acceptor in catalysis.

It belongs to the PanB family. In terms of assembly, homodecamer; pentamer of dimers. The cofactor is Mg(2+).

It is found in the cytoplasm. It carries out the reaction 3-methyl-2-oxobutanoate + (6R)-5,10-methylene-5,6,7,8-tetrahydrofolate + H2O = 2-dehydropantoate + (6S)-5,6,7,8-tetrahydrofolate. Its pathway is cofactor biosynthesis; coenzyme A biosynthesis. Its function is as follows. Catalyzes the reversible reaction in which hydroxymethyl group from 5,10-methylenetetrahydrofolate is transferred onto alpha-ketoisovalerate to form ketopantoate. The protein is 3-methyl-2-oxobutanoate hydroxymethyltransferase of Halobacterium salinarum (strain ATCC 29341 / DSM 671 / R1).